The sequence spans 183 residues: Ribosome-recycling factor (183 aa).

The interval 134 to 156 (DANDELKKHQSEMSQDEVKGHQD) is disordered.

This sequence belongs to the RRF family.

The protein resides in the cytoplasm. Functionally, responsible for the release of ribosomes from messenger RNA at the termination of protein biosynthesis. May increase the efficiency of translation by recycling ribosomes from one round of translation to another. In Leptospira biflexa serovar Patoc (strain Patoc 1 / Ames), this protein is Ribosome-recycling factor.